The sequence spans 252 residues: tRNA pseudouridine synthase A (252 aa).

Asp52 (nucleophile) is an active-site residue. Tyr111 is a binding site for substrate.

The protein belongs to the tRNA pseudouridine synthase TruA family. In terms of assembly, homodimer.

The enzyme catalyses uridine(38/39/40) in tRNA = pseudouridine(38/39/40) in tRNA. Its function is as follows. Formation of pseudouridine at positions 38, 39 and 40 in the anticodon stem and loop of transfer RNAs. The chain is tRNA pseudouridine synthase A from Methylorubrum populi (strain ATCC BAA-705 / NCIMB 13946 / BJ001) (Methylobacterium populi).